The primary structure comprises 416 residues: Putative pseudouridine transporter (416 aa).

Residues M1 to D2 lie on the Periplasmic side of the membrane. The helical transmembrane segment at I3–N23 threads the bilayer. Topologically, residues K24–T31 are cytoplasmic. Residues V32–G52 traverse the membrane as a helical segment. The Periplasmic segment spans residues K53–A104. A helical transmembrane segment spans residues I105–I125. Residues R126 to E172 lie on the Cytoplasmic side of the membrane. A helical transmembrane segment spans residues L173–A193. At G194–G196 the chain is on the periplasmic side. The helical transmembrane segment at V197 to A217 threads the bilayer. At R218–A268 the chain is on the cytoplasmic side. Residues F269–F289 traverse the membrane as a helical segment. Residues A290–T352 lie on the Periplasmic side of the membrane. A helical membrane pass occupies residues I353–V373. At G374–A394 the chain is on the cytoplasmic side. Residues L395–L415 traverse the membrane as a helical segment. A topological domain (periplasmic) is located at residue A416.

It belongs to the concentrative nucleoside transporter (CNT) (TC 2.A.41) family.

The protein resides in the cell inner membrane. Could be involved in pseudouridine transport. In Escherichia coli (strain K12), this protein is Putative pseudouridine transporter (psuT).